A 380-amino-acid chain; its full sequence is MAPNIRKSHPLLKMVNNSLIDLPTPSNISSWWNFGSLLGICLMTQILTGLLLAMHYTADTTLAFSSVAHTCRNVQYGWLIRNLHANGASFFFICIYFHIGRGLYYGSYLYKETWNTGVILLLTLMATAFVGYVLPWGQMSFWGATVITNLFSAIPYIGQTLVEWAWGGFSVDNPTLTRFFALHFLLPFMIAGLTLIHLTFLHESGSNNPLGIVSNCDKIPFHPYFTLKDILGFTLMFLPLTTLALFSPNLLGDPENFTPANPLVTPPHIKPEWYFLFAYAILRSIPNKLGGVLALAASVLILFLIPFLHKAKQRTMTFRPISQLLFWILVANLLILTWVGSQPVEHPFIIIGQLASVTYFTILLVLFPIIGALENKMLNY.

The next 4 helical transmembrane spans lie at 34–54, 78–99, 114–134, and 179–199; these read FGSLLGICLMTQILTGLLLAM, WLIRNLHANGASFFFICIYFHI, WNTGVILLLTLMATAFVGYVL, and FFALHFLLPFMIAGLTLIHLT. The heme b site is built by His84 and His98. The heme b site is built by His183 and His197. His202 serves as a coordination point for a ubiquinone. Helical transmembrane passes span 227–247, 289–309, 321–341, and 348–368; these read LKDILGFTLMFLPLTTLALFS, LGGVLALAASVLILFLIPFLH, ISQLLFWILVANLLILTWVGS, and FIIIGQLASVTYFTILLVLFP.

The protein belongs to the cytochrome b family. The cytochrome bc1 complex contains 11 subunits: 3 respiratory subunits (MT-CYB, CYC1 and UQCRFS1), 2 core proteins (UQCRC1 and UQCRC2) and 6 low-molecular weight proteins (UQCRH/QCR6, UQCRB/QCR7, UQCRQ/QCR8, UQCR10/QCR9, UQCR11/QCR10 and a cleavage product of UQCRFS1). This cytochrome bc1 complex then forms a dimer. Heme b is required as a cofactor.

It localises to the mitochondrion inner membrane. Its function is as follows. Component of the ubiquinol-cytochrome c reductase complex (complex III or cytochrome b-c1 complex) that is part of the mitochondrial respiratory chain. The b-c1 complex mediates electron transfer from ubiquinol to cytochrome c. Contributes to the generation of a proton gradient across the mitochondrial membrane that is then used for ATP synthesis. This is Cytochrome b (MT-CYB) from Pachyptila salvini (Salvin's prion).